The sequence spans 351 residues: Protein disulfide isomerase CRELD2 (351 aa).

The signal sequence occupies residues 1–21; the sequence is MRPPAPAVLGLLLLLLPTGEA. The CXXC signature appears at 28 to 31; that stretch reads CKRC. 4 cysteine pairs are disulfide-bonded: C28–C31, C137–C151, C145–C163, and C165–C174. The region spanning 133 to 175 is the EGF-like 1 domain; it reads DCLACQGGSERPCSGNGHCVGDGTREGDGSCQCHLGYQGPLCS. One copy of the FU 1 repeat lies at 190–237; it reads HSICSACDEACKTCVGPTNRDCGQCEVGWVRQDDACVDVDECAAEPPP. Residue N248 is glycosylated (N-linked (GlcNAc...) asparagine). Residues 250-297 form an FU 2 repeat; that stretch reads SFVCEECDPTCMGCTGKGPTQCRECIAGYSKESGQCEDIDECSLAEKP. A CXXC motif is present at residues 260-263; sequence CMGC. 4 disulfide bridges follow: C260–C263, C291–C305, C298–C314, and C316–C327. An EGF-like 2; calcium-binding domain is found at 287–328; the sequence is DIDECSLAEKPCLRDNENCYNTPGSFVCVCPDGFEEAEDTCV. A disordered region spans residues 329 to 351; sequence QTRPAGAEATEASPTQPPSREDL.

Belongs to the CRELD family. As to quaternary structure, interacts with CHRNA4. Component of a complex containing at least CRELD2, MANF, MATN3 and PDIA4.

It localises to the endoplasmic reticulum. It catalyses the reaction Catalyzes the rearrangement of -S-S- bonds in proteins.. Protein disulfide isomerase. Might play a role in the unfolded protein response. May regulate transport of alpha4-beta2 neuronal acetylcholine receptor. The protein is Protein disulfide isomerase CRELD2 (CRELD2) of Bos taurus (Bovine).